We begin with the raw amino-acid sequence, 548 residues long: Mercuric reductase (548 aa).

The HMA domain maps to 1-65; the sequence is MTEITVNGMT…AIAALGYQGS (65 aa). A metal cation-binding residues include Cys11 and Cys14. Positions 97, 117, and 122 each coordinate FAD. Cys123 and Cys128 form a disulfide bridge. Positions 132, 198, 390, and 398 each coordinate FAD. The Hg(2+) site is built by Cys545 and Cys546.

It belongs to the class-I pyridine nucleotide-disulfide oxidoreductase family. Homodimer. FAD is required as a cofactor.

The enzyme catalyses Hg + NADP(+) + H(+) = Hg(2+) + NADPH. In terms of biological role, resistance to Hg(2+) in bacteria appears to be governed by a specialized system which includes mercuric reductase. MerA protein is responsible for volatilizing mercury as Hg(0). In Pseudomonas fluorescens, this protein is Mercuric reductase (merA).